Reading from the N-terminus, the 960-residue chain is Chromo domain-containing protein 1 (960 aa).

The Chromo domain occupies 22-74 (YEVEDILADRVNKNGINEYYIKWAGYDWYDNTWEPEQNLFGAEKVLKKWKKRK).

Ago1, chp1 and tas3 interact to form the core of the RNA-induced transcriptional silencing (RITS) complex. The RITS complex interacts with the RDRC complex via interaction between ago1 and hrr1. Clr4 has a role in mediating this interaction. Interacts with dri1.

It is found in the nucleus. Its subcellular location is the cytoplasm. The protein resides in the cytoskeleton. It localises to the microtubule organizing center. The protein localises to the spindle pole body. Functionally, component of the kinetochore which plays a role in stabilizing microtubules and so allowing accurate chromosome segregation. Has a role in the RNA interference (RNAi) pathway which is important for heterochromatin formation and accurate chromosome segregation. A member of the RNA-induced transcriptional silencing (RITS) complex which is involved in the biosynthesis of dsRNA from primer siRNAs provided by the RNA-directed RNA polymerase (RDRC) complex. The polypeptide is Chromo domain-containing protein 1 (Schizosaccharomyces pombe (strain 972 / ATCC 24843) (Fission yeast)).